We begin with the raw amino-acid sequence, 179 residues long: Mediator of RNA polymerase II transcription subunit 28 (179 aa).

The disordered stretch occupies residues 1–43 (MASSMCGMFPGQQPPGSLPPPGPGGPGQPGLLTGTPGNRGANN). A compositionally biased stretch (pro residues) spans 12–26 (QQPPGSLPPPGPGGP). The stretch at 109-139 (EQVEKEDASELKNELQRKEMLIQKHLAKIHH) forms a coiled coil.

This sequence belongs to the Mediator complex subunit 28 family. As to quaternary structure, component of the Mediator complex.

The protein localises to the nucleus. Its function is as follows. Component of the Mediator complex, a coactivator involved in the regulated transcription of nearly all RNA polymerase II-dependent genes. Mediator functions as a bridge to convey information from gene-specific regulatory proteins to the basal RNA polymerase II transcription machinery. Mediator is recruited to promoters by direct interactions with regulatory proteins and serves as a scaffold for the assembly of a functional preinitiation complex with RNA polymerase II and the general transcription factors. The polypeptide is Mediator of RNA polymerase II transcription subunit 28 (med28) (Danio rerio (Zebrafish)).